The primary structure comprises 294 residues: 4-hydroxy-tetrahydrodipicolinate synthase (294 aa).

Thr47 is a binding site for pyruvate. Catalysis depends on Tyr135, which acts as the Proton donor/acceptor. Lys163 serves as the catalytic Schiff-base intermediate with substrate. Thr205 contacts pyruvate.

The protein belongs to the DapA family. Homotetramer; dimer of dimers.

It localises to the cytoplasm. It catalyses the reaction L-aspartate 4-semialdehyde + pyruvate = (2S,4S)-4-hydroxy-2,3,4,5-tetrahydrodipicolinate + H2O + H(+). It participates in amino-acid biosynthesis; L-lysine biosynthesis via DAP pathway; (S)-tetrahydrodipicolinate from L-aspartate: step 3/4. Its function is as follows. Catalyzes the condensation of (S)-aspartate-beta-semialdehyde [(S)-ASA] and pyruvate to 4-hydroxy-tetrahydrodipicolinate (HTPA). This Rickettsia felis (strain ATCC VR-1525 / URRWXCal2) (Rickettsia azadi) protein is 4-hydroxy-tetrahydrodipicolinate synthase.